A 194-amino-acid chain; its full sequence is Imidazoleglycerol-phosphate dehydratase (194 aa).

Belongs to the imidazoleglycerol-phosphate dehydratase family.

It is found in the cytoplasm. The enzyme catalyses D-erythro-1-(imidazol-4-yl)glycerol 3-phosphate = 3-(imidazol-4-yl)-2-oxopropyl phosphate + H2O. It functions in the pathway amino-acid biosynthesis; L-histidine biosynthesis; L-histidine from 5-phospho-alpha-D-ribose 1-diphosphate: step 6/9. The chain is Imidazoleglycerol-phosphate dehydratase from Thermus thermophilus (strain ATCC BAA-163 / DSM 7039 / HB27).